Consider the following 100-residue polypeptide: Urease subunit gamma (100 aa).

This sequence belongs to the urease gamma subunit family. Heterotrimer of UreA (gamma), UreB (beta) and UreC (alpha) subunits. Three heterotrimers associate to form the active enzyme.

It localises to the cytoplasm. It carries out the reaction urea + 2 H2O + H(+) = hydrogencarbonate + 2 NH4(+). It functions in the pathway nitrogen metabolism; urea degradation; CO(2) and NH(3) from urea (urease route): step 1/1. The protein is Urease subunit gamma of Prochlorococcus marinus (strain MIT 9215).